We begin with the raw amino-acid sequence, 355 residues long: Protein RecA (355 aa).

67–74 (GPESSGKT) serves as a coordination point for ATP.

Belongs to the RecA family.

It is found in the cytoplasm. In terms of biological role, can catalyze the hydrolysis of ATP in the presence of single-stranded DNA, the ATP-dependent uptake of single-stranded DNA by duplex DNA, and the ATP-dependent hybridization of homologous single-stranded DNAs. It interacts with LexA causing its activation and leading to its autocatalytic cleavage. This Shewanella piezotolerans (strain WP3 / JCM 13877) protein is Protein RecA.